Consider the following 478-residue polypeptide: UDP-N-acetylmuramate--L-alanine ligase (478 aa).

112–118 contacts ATP; it reads GTHGKTT.

The protein belongs to the MurCDEF family.

It localises to the cytoplasm. It carries out the reaction UDP-N-acetyl-alpha-D-muramate + L-alanine + ATP = UDP-N-acetyl-alpha-D-muramoyl-L-alanine + ADP + phosphate + H(+). The protein operates within cell wall biogenesis; peptidoglycan biosynthesis. In terms of biological role, cell wall formation. In Polaromonas naphthalenivorans (strain CJ2), this protein is UDP-N-acetylmuramate--L-alanine ligase.